A 346-amino-acid polypeptide reads, in one-letter code: UDP-3-O-acylglucosamine N-acyltransferase (346 aa).

Residue His-240 is the Proton acceptor of the active site.

This sequence belongs to the transferase hexapeptide repeat family. LpxD subfamily. As to quaternary structure, homotrimer.

The catalysed reaction is a UDP-3-O-[(3R)-3-hydroxyacyl]-alpha-D-glucosamine + a (3R)-hydroxyacyl-[ACP] = a UDP-2-N,3-O-bis[(3R)-3-hydroxyacyl]-alpha-D-glucosamine + holo-[ACP] + H(+). Its pathway is bacterial outer membrane biogenesis; LPS lipid A biosynthesis. Functionally, catalyzes the N-acylation of UDP-3-O-acylglucosamine using 3-hydroxyacyl-ACP as the acyl donor. Is involved in the biosynthesis of lipid A, a phosphorylated glycolipid that anchors the lipopolysaccharide to the outer membrane of the cell. The polypeptide is UDP-3-O-acylglucosamine N-acyltransferase (Bacteroides fragilis (strain YCH46)).